Reading from the N-terminus, the 189-residue chain is UPF0149 protein VF_2102 (189 aa).

The protein belongs to the UPF0149 family.

This is UPF0149 protein VF_2102 from Aliivibrio fischeri (strain ATCC 700601 / ES114) (Vibrio fischeri).